Here is a 271-residue protein sequence, read N- to C-terminus: Sorting nexin-11 (271 aa).

The region spanning 16–132 (VITVRVQDPR…HLFLQSQLSV (117 aa)) is the PX domain. The a 1,2-diacyl-sn-glycero-3-phospho-(1D-myo-inositol-3-phosphate) site is built by Arg-59, Lys-85, and Arg-99. The interval 135–139 (IEACV) is important for membrane trafficking. Residues 185–271 (PRSGRRSSPS…PTQLDTAWDK (87 aa)) form a disordered region. Low complexity predominate over residues 213–230 (SEGPSSESPTLLPSSSLP).

This sequence belongs to the sorting nexin family. Monomer. Interacts with TRPV3; this interaction promotes TRPV3 trafficking from the cell membrane to lysosome for degradation.

It localises to the cell membrane. Its subcellular location is the endosome. It is found in the cytoplasm. Functionally, phosphoinositide-binding protein involved in protein sorting and membrane trafficking in endosomes. Regulates the levels of TRPV3 by promoting its trafficking from the cell membrane to lysosome for degradation. In Mus musculus (Mouse), this protein is Sorting nexin-11 (Snx11).